The sequence spans 689 residues: MSENTFLVEIGTEELPPKALRSLAESFAANVTAELDNAGLAHGKVEWFAAPRRLALKVANLAAAQADREVEKRGPAIAQAFDAEGKPSKAAEGWARGCGITVDQAERLTTDKGEWLLYRAHVKGESTEALLPNMIASSLAKLPIPKLMRWGASDVHFVRPVHTVTLLLGDKVIPATILGIPSDRVIRGHRFMGEPEFTIDHADQYPQILLERGKVIADYEQRKAKIKADAEEAARKIGGQADLSESLLEEVTSLVEWPVVLTAKFEEKFLGVPSEALVYTMKGDQKYFPVYDNAGKLLPNFIFVANIESKDPQQIISGNEKVVRPRLADAEFFFNTDRKKRLEDNLPRLETVLFQQQLGTLRDKTDRIQALAGWIAGQIGADVNHATRAGLLSKCDLMTNMVFEFTDTQGVMGMHYARHDGEAEDVAVALNEQYQPRFAGDALPSNPVACAVAIADKMDTLAGIFGIGQHPKGDKDPFALRRAALGVLRIIVEKNLNLDLQTLTEEAVRLYGEKLTNANVVDDVIDFMLGRFRAWYQDEGYGVDTIQAVLARRPTRPADFDARMKAVSHFRTLEESSALAAANKRVSNILAKSDETLNDIVHASVLKEAAEIKLAGNLVVLRDKLQPYFAAGRYQDALIELAALREPVDEFFENVMVNAEDKDVRINRLTLLSKLRELFLQVADISLLQ.

The protein belongs to the class-II aminoacyl-tRNA synthetase family. In terms of assembly, tetramer of two alpha and two beta subunits.

The protein localises to the cytoplasm. It carries out the reaction tRNA(Gly) + glycine + ATP = glycyl-tRNA(Gly) + AMP + diphosphate. This is Glycine--tRNA ligase beta subunit from Klebsiella pneumoniae (strain 342).